A 268-amino-acid chain; its full sequence is MPRMALGLAYDGSSWQGWQTQPHRQTVQDTLEAALARFAGIDGSLPTVCAGRTDTGVHAAMQVVHLDTRLERRAESWVRGVNAFLPPSIAVQWAQPVPDDFHARFSARSRTYLYLLWRGRVRPPLWAGRAGWCFQPLDVQAMRQAASALLGEHDFSSFRSSQCQARHPVRTLHRLDIDERGPFLVFTLRANAFLHHMVRNLMGALLQIGQGRQPVAWMPAVLAARDRRLAAPTFAADGLYLSAIEYPPEYKLNDTDGSGQLLSPFTFA.

D54 acts as the Nucleophile in catalysis. Y112 is a binding site for substrate.

It belongs to the tRNA pseudouridine synthase TruA family. Homodimer.

The catalysed reaction is uridine(38/39/40) in tRNA = pseudouridine(38/39/40) in tRNA. Functionally, formation of pseudouridine at positions 38, 39 and 40 in the anticodon stem and loop of transfer RNAs. In Bordetella petrii (strain ATCC BAA-461 / DSM 12804 / CCUG 43448), this protein is tRNA pseudouridine synthase A.